A 240-amino-acid polypeptide reads, in one-letter code: 1-(5-phosphoribosyl)-5-[(5-phosphoribosylamino)methylideneamino] imidazole-4-carboxamide isomerase (240 aa).

Asp-8 acts as the Proton acceptor in catalysis. The active-site Proton donor is Asp-129.

The protein belongs to the HisA/HisF family.

The protein resides in the cytoplasm. It catalyses the reaction 1-(5-phospho-beta-D-ribosyl)-5-[(5-phospho-beta-D-ribosylamino)methylideneamino]imidazole-4-carboxamide = 5-[(5-phospho-1-deoxy-D-ribulos-1-ylimino)methylamino]-1-(5-phospho-beta-D-ribosyl)imidazole-4-carboxamide. It participates in amino-acid biosynthesis; L-histidine biosynthesis; L-histidine from 5-phospho-alpha-D-ribose 1-diphosphate: step 4/9. This chain is 1-(5-phosphoribosyl)-5-[(5-phosphoribosylamino)methylideneamino] imidazole-4-carboxamide isomerase, found in Listeria monocytogenes serotype 4b (strain F2365).